The following is a 498-amino-acid chain: ATP synthase subunit beta, chloroplastic (498 aa).

172 to 179 (GGAGVGKT) is an ATP binding site.

It belongs to the ATPase alpha/beta chains family. In terms of assembly, F-type ATPases have 2 components, CF(1) - the catalytic core - and CF(0) - the membrane proton channel. CF(1) has five subunits: alpha(3), beta(3), gamma(1), delta(1), epsilon(1). CF(0) has four main subunits: a(1), b(1), b'(1) and c(9-12).

The protein localises to the plastid. Its subcellular location is the chloroplast thylakoid membrane. The enzyme catalyses ATP + H2O + 4 H(+)(in) = ADP + phosphate + 5 H(+)(out). Functionally, produces ATP from ADP in the presence of a proton gradient across the membrane. The catalytic sites are hosted primarily by the beta subunits. This chain is ATP synthase subunit beta, chloroplastic, found in Panax ginseng (Korean ginseng).